Reading from the N-terminus, the 293-residue chain is tRNA pseudouridine synthase B (293 aa).

Aspartate 39 (nucleophile) is an active-site residue.

It belongs to the pseudouridine synthase TruB family. Type 1 subfamily.

The enzyme catalyses uridine(55) in tRNA = pseudouridine(55) in tRNA. In terms of biological role, responsible for synthesis of pseudouridine from uracil-55 in the psi GC loop of transfer RNAs. The sequence is that of tRNA pseudouridine synthase B from Streptococcus thermophilus (strain CNRZ 1066).